A 247-amino-acid polypeptide reads, in one-letter code: UDP-2,3-diacylglucosamine hydrolase (247 aa).

Residues Asp-8, His-10, Asp-41, Asn-79, and His-115 each coordinate Mn(2+). Substrate is bound at residue 79–80; it reads NH. Asp-123, Lys-165, Lys-168, and His-196 together coordinate substrate. 2 residues coordinate Mn(2+): His-196 and His-198.

The protein belongs to the LpxH family. The cofactor is Mn(2+).

Its subcellular location is the cell inner membrane. It catalyses the reaction UDP-2-N,3-O-bis[(3R)-3-hydroxytetradecanoyl]-alpha-D-glucosamine + H2O = 2-N,3-O-bis[(3R)-3-hydroxytetradecanoyl]-alpha-D-glucosaminyl 1-phosphate + UMP + 2 H(+). The protein operates within glycolipid biosynthesis; lipid IV(A) biosynthesis; lipid IV(A) from (3R)-3-hydroxytetradecanoyl-[acyl-carrier-protein] and UDP-N-acetyl-alpha-D-glucosamine: step 4/6. Hydrolyzes the pyrophosphate bond of UDP-2,3-diacylglucosamine to yield 2,3-diacylglucosamine 1-phosphate (lipid X) and UMP by catalyzing the attack of water at the alpha-P atom. Involved in the biosynthesis of lipid A, a phosphorylated glycolipid that anchors the lipopolysaccharide to the outer membrane of the cell. The sequence is that of UDP-2,3-diacylglucosamine hydrolase from Blochmanniella floridana.